A 158-amino-acid chain; its full sequence is uncharacterized protein (158 aa).

The signal sequence occupies residues 1-16 (MFRPILILTILSCVLA). An N-linked (GlcNAc...) asparagine glycan is attached at N122.

This is an uncharacterized protein from Caenorhabditis elegans.